The primary structure comprises 1097 residues: FHIP family protein GK23746 (1097 aa).

The span at 1 to 21 (MSWLRSSPLRQSLTRTTSSGN) shows a compositional bias: polar residues. The disordered stretch occupies residues 1–25 (MSWLRSSPLRQSLTRTTSSGNGIRP). S491 carries the phosphoserine modification. Disordered stretches follow at residues 639 to 684 (DVSA…SGRR), 820 to 856 (NENS…RSAY), and 932 to 1042 (NNQQ…SEPV). The segment covering 641–654 (SASSGNGTGSVVVG) has biased composition (low complexity). Phosphoserine is present on S823. 2 stretches are compositionally biased toward low complexity: residues 824–852 (PLHQ…GAQQ) and 932–948 (NNQQ…SSSS). Over residues 949 to 962 (AVTTCETSLSTQPH) the composition is skewed to polar residues. Residues 973–985 (TTSSTISTSSGTT) show a composition bias toward low complexity. A compositionally biased stretch (gly residues) spans 986-995 (AGSGGGGGSG). 2 stretches are compositionally biased toward low complexity: residues 996 to 1006 (SNSSFSIGGST) and 1013 to 1022 (SNNTTNSSST).

This sequence belongs to the FHIP family.

This chain is FHIP family protein GK23746, found in Drosophila willistoni (Fruit fly).